The sequence spans 373 residues: MKLRLLNMILSMMNKTNNNNNNNINNKKLLLKNMLLDMNNKRMNNMKTMLKNNNMNINNKLQHLNNMNNWNTQIYNYNKNMEIMNIMNDKLINKLLYKMMTLKLNNMNINKIIMSKTINQHSLNKLNIKFYYYYNNDINNMNNNNNNYYMNMMNKLMNIMNNNMNNSLCNILSYYYNKKVTIESIKLSYIYLNSDIFSKYISLNDMNKYNNGILTNYQRMLNNIMPKLNDHNISMNYINNINNINNNKYNNMINLLNNNNNNNNNNNNNNNNYIDNINNIYNNMTIDNIPMDILMYKYLVGWSIKFKGRLNNNNGRTSTTNLLNGTFNNKKYLWSNINNNYKLNYIPSNHNLYNNSNINKNGKYNIKVKLNFI.

This sequence belongs to the universal ribosomal protein uS3 family.

The protein localises to the mitochondrion. Functionally, essential for mitochondrial protein synthesis and required for the maturation of small ribosomal subunits. This chain is Small ribosomal subunit protein uS3m (VAR1), found in Saccharomyces paradoxus (Yeast).